Here is a 113-residue protein sequence, read N- to C-terminus: U11-theraphotoxin-Hhn1a (113 aa).

An N-terminal signal peptide occupies residues 1–21 (MNTVRVTFLLVFVLAVSLGQT). Positions 22–74 (DKDENRMEMQEKTEQGKSYLDFAENLLLQKLEELEAKLLEEDSEESRNSRQKR) are excised as a propeptide. 3 disulfides stabilise this stretch: Cys75-Cys90, Cys82-Cys95, and Cys89-Cys110.

It belongs to the neurotoxin 14 (magi-1) family. 01 (HNTX-16) subfamily. Expressed by the venom gland.

The protein localises to the secreted. Functionally, probable ion channel inhibitor. This Cyriopagopus hainanus (Chinese bird spider) protein is U11-theraphotoxin-Hhn1a.